We begin with the raw amino-acid sequence, 570 residues long: 5-aminolevulinate synthase, mitochondrial (570 aa).

The transit peptide at 1–53 directs the protein to the mitochondrion; the sequence is MESVIRSSAKICPFMHSATGSMQSVKALKNANLPAIAQQCPFMGKAMEQRRGY. Substrate contacts are provided by arginine 119, serine 232, and lysine 251. Pyridoxal 5'-phosphate-binding residues include serine 284, histidine 312, and threonine 356. Lysine 359 is a catalytic residue. Position 359 is an N6-(pyridoxal phosphate)lysine (lysine 359). 2 residues coordinate pyridoxal 5'-phosphate: threonine 388 and threonine 389. Residue threonine 474 coordinates substrate.

This sequence belongs to the class-II pyridoxal-phosphate-dependent aminotransferase family. In terms of assembly, homodimer. Requires pyridoxal 5'-phosphate as cofactor.

The protein localises to the mitochondrion matrix. The catalysed reaction is succinyl-CoA + glycine + H(+) = 5-aminolevulinate + CO2 + CoA. The protein operates within porphyrin-containing compound metabolism; protoporphyrin-IX biosynthesis; 5-aminolevulinate from glycine: step 1/1. Functionally, catalyzes the synthesis of 5-aminolevulinate (ALA) from succinyl-CoA and glycine, the first and rate-limiting step in heme biosynthesis. This is 5-aminolevulinate synthase, mitochondrial (HEM1) from Kluyveromyces lactis (strain ATCC 8585 / CBS 2359 / DSM 70799 / NBRC 1267 / NRRL Y-1140 / WM37) (Yeast).